Reading from the N-terminus, the 565-residue chain is MATEMQAAPVLSTPDSLILEATEPVARQNATRTLSDEELSITYDIERTLQEIRQARYKRIALQFPDDMLPDAPRVFQLLSRGLACRDVDKITVEKNGNGTGGVESEKLAQDVSQLSVDDKPEPEPKLYILADTSYGTCCVDEVAAEHVNADVVVHYGRSCLSPTARLPVIYVFTHKELPIEPVIQAFKATYPDQATKIILAADVTYCDHIPAVYARLMEEGYTNLYATELIHCPSSAIPNRTVPDSVRENPDTLSEWQLFHISDPPTALLLTLASRVAAIHIYPTTDAPSDNVKPLPVSTSAALGRRYAILTRLSTVPIFGILINTLSVKNYLHIVEHVKQKIADAGKKSYMFVVGKLNAAKVANFSEIGGWVVIGCWESSLVDSKDFWKPVITPFELELALKGDHERVWTGAWQSDFQSILDQPAEEAQTADHEESPNDDDDMSEPESAPPEFDLRTGRYVSHTRPMRNPAPRVSAQSDDAVSAASGPAAARALARRAKGELAMIGGTVSPGAEYLRSQRTWKGLGSDFDIQYDDEDPSDSTLVVEGRKGIARGYTVGDSIEKH.

Positions 139, 160, and 377 each coordinate [4Fe-4S] cluster. Disordered regions lie at residues Gln-424–Thr-458 and His-464–Val-483.

It belongs to the DPH1/DPH2 family. DPH2 subfamily. Component of the 2-(3-amino-3-carboxypropyl)histidine synthase complex composed of dph1, dph2, dph3 and a NADH-dependent reductase, predominantly cbr1. [4Fe-4S] cluster serves as cofactor.

Its subcellular location is the cytoplasm. The protein operates within protein modification; peptidyl-diphthamide biosynthesis. Functionally, required for the first step of diphthamide biosynthesis, a post-translational modification of histidine which occurs in elongation factor 2. Dph1 and dph2 transfer a 3-amino-3-carboxypropyl (ACP) group from S-adenosyl-L-methionine (SAM) to a histidine residue, the reaction is assisted by a reduction system comprising dph3 and a NADH-dependent reductase, predominantly cbr1. Facilitates the reduction of the catalytic iron-sulfur cluster found in the dph1 subunit. The sequence is that of 2-(3-amino-3-carboxypropyl)histidine synthase subunit 2 (dph2) from Aspergillus fumigatus (strain ATCC MYA-4609 / CBS 101355 / FGSC A1100 / Af293) (Neosartorya fumigata).